We begin with the raw amino-acid sequence, 154 residues long: Large ribosomal subunit protein eL24 (154 aa).

Residues 92 to 154 are disordered; the sequence is AKRNQKPEVR…AAAPRVGGKR (63 aa). A compositionally biased stretch (basic and acidic residues) spans 96 to 122; that stretch reads QKPEVRKAQREQAVKAAKEKKKADQVG. Over residues 129-154 the composition is skewed to low complexity; it reads KARATAPKTKAPKTVKAAAPRVGGKR.

The protein belongs to the eukaryotic ribosomal protein eL24 family.

This Branchiostoma belcheri (Amphioxus) protein is Large ribosomal subunit protein eL24 (RPL24).